The sequence spans 201 residues: Eukaryotic translation initiation factor 4E-5 (201 aa).

Cys-122 and Cys-126 form a disulfide bridge.

Belongs to the eukaryotic initiation factor 4E family. In terms of assembly, eIF4F is a multi-subunit complex, the composition of which varies with external and internal environmental conditions. It is composed of at least eIF4A, eIF4E and eIF4G. eIF4E is also known to interact with other partners. As to expression, enriched in the germline.

Its function is as follows. Recognizes and binds the 7-methylguanosine-containing mRNA cap during an early step in the initiation of protein synthesis and facilitates ribosome binding by inducing the unwinding of the mRNAs secondary structures. All 5 eIF4E proteins bind monomethyl cap structures. Only ife-1, ife-2 and ife-5 bind trimethyl cap structures which result from trans-splicing. Translation of trimethyl cap structure mRNAs may be regulated by intracellular redox state; disulfide bonds change the width and depth of the cap-binding cavity determining selectivity to mRNA caps. The sequence is that of Eukaryotic translation initiation factor 4E-5 (ife-5) from Caenorhabditis elegans.